The primary structure comprises 222 residues: Glutathione S-transferase 3 (222 aa).

Residues 2–83 form the GST N-terminal domain; sequence APLKLYGMPL…YIASKYASEG (82 aa). Residues serine 12, 13-14, 41-42, 54-55, and 67-68 each bind glutathione; these read PN, HK, QI, and ES. In terms of domain architecture, GST C-terminal spans 89–219; it reads ATASAAKLEV…AAIPLPPPPS (131 aa).

The protein belongs to the GST superfamily. Phi family. Homodimer.

It carries out the reaction RX + glutathione = an S-substituted glutathione + a halide anion + H(+). In terms of biological role, conjugation of reduced glutathione to a wide number of exogenous and endogenous hydrophobic electrophiles. Involved in the detoxification of certain herbicides. This chain is Glutathione S-transferase 3, found in Zea mays (Maize).